A 269-amino-acid chain; its full sequence is MERSQSRLSLSASFEALAIYFPCMNSFDDEDAADSRRLKGAIQRSTETGLAVEMPSRTLRQASHESIEDSMNSYGSEGNLNYGGVCLASDAQFSDFLGSMGPAQFVGRQTLATTPMGDVEIGLQERNGQLEVDIIQARGLTAKPGSKTLPAAYIKAYLLENGVCIAKKKTKVARKSLDPLYNQVLLFPESPQGKVLQVIVWGNYGRMERKQFMGVARVLLEELDLTTLAVGWYKLFPTSSMVDPATGPLLRQASQLSLESTVGPCGERS.

In terms of domain architecture, C2 spans 115 to 233; that stretch reads PMGDVEIGLQ…DLTTLAVGWY (119 aa). A phosphoserine mark is found at Ser-254 and Ser-257.

As to quaternary structure, binds PPFIA3. Does not bind RAB3.

The protein resides in the synapse. Its function is as follows. Regulates synaptic membrane exocytosis. The protein is Regulating synaptic membrane exocytosis protein 4 (Rims4) of Mus musculus (Mouse).